A 168-amino-acid chain; its full sequence is G/U mismatch-specific DNA glycosylase (168 aa).

Belongs to the uracil-DNA glycosylase (UDG) superfamily. TDG/mug family. In terms of assembly, binds DNA as a monomer.

It localises to the cytoplasm. The catalysed reaction is Specifically hydrolyzes mismatched double-stranded DNA and polynucleotides, releasing free uracil.. Its function is as follows. Excises ethenocytosine and uracil, which can arise by alkylation or deamination of cytosine, respectively, from the corresponding mispairs with guanine in ds-DNA. It is capable of hydrolyzing the carbon-nitrogen bond between the sugar-phosphate backbone of the DNA and the mispaired base. The complementary strand guanine functions in substrate recognition. Required for DNA damage lesion repair in stationary-phase cells. The protein is G/U mismatch-specific DNA glycosylase of Shigella dysenteriae serotype 1 (strain Sd197).